The primary structure comprises 677 residues: Testis-specific Y-encoded-like protein 2 (677 aa).

Residues Met-1–Ala-54 are disordered. Lys-11 is covalently cross-linked (Glycyl lysine isopeptide (Lys-Gly) (interchain with G-Cter in SUMO2)). Ser-18 bears the Phosphoserine mark. A compositionally biased stretch (pro residues) spans Leu-25–Arg-44. Glycyl lysine isopeptide (Lys-Gly) (interchain with G-Cter in SUMO2) cross-links involve residues Lys-158 and Lys-160. Residues Lys-175–Ala-202 form a disordered region. Residues Val-178–Lys-193 are compositionally biased toward basic residues. Thr-333 is modified (phosphothreonine). Residues Ala-469–Gln-658 form a disordered region. The segment covering Gly-484–Lys-493 has biased composition (polar residues). Basic and acidic residues predominate over residues Glu-509–Gly-525. A compositionally biased stretch (polar residues) spans Asp-526–Gln-540. Composition is skewed to acidic residues over residues Ser-543–Asp-581 and Asp-606–Glu-627. Basic and acidic residues predominate over residues Asp-639–Val-650. Ser-648, Ser-652, and Ser-655 each carry phosphoserine.

This sequence belongs to the nucleosome assembly protein (NAP) family. Interacts with histones. Interacts with CASK. Part of a complex containing CASK, TBR1 and TSPYL2. Phosphorylation at Thr-333 impairs function on cell proliferation. In terms of tissue distribution, present at high levels in the pituitary gland and at moderate levels in adrenal gland, brain, testis and ovary. In brain, expressed both in mature neurons and progenitor cells (at protein level).

It localises to the nucleus. The protein resides in the cytoplasm. Part of the CASK/TBR1/TSPYL2 transcriptional complex which modulates gene expression in response to neuronal synaptic activity, probably by facilitating nucleosome assembly. May inhibit cell proliferation by inducing p53-dependent CDKN1A expression. This is Testis-specific Y-encoded-like protein 2 (Tspyl2) from Mus musculus (Mouse).